The following is a 176-amino-acid chain: Skp1-related protein (176 aa).

This sequence belongs to the SKP1 family. In terms of assembly, probable component of the SCF(sel-10) E3 ubiquitin-protein ligase complex containing F-box domain-containing protein sel-10 as the substrate recognition component. Interacts with cul-1. May interact with the F-box protein mec-15. Interacts with dre-1. Interacts with syg-1. Interacts with sel-10. As to expression, ubiquitously expressed in the adult.

In terms of biological role, probable essential component of SCF (SKP1-CUL1-F-box protein) E3 ubiquitin-protein ligase complexes, which mediate the ubiquitination and subsequent proteasomal degradation of target proteins. Regulates cell proliferation during embryonic and larval development. Involved in synapse elimination in early synapse development. May negatively regulate the apoptotic activity of cep-1 in response to genotoxic stress. Plays a role in sex determination. This Caenorhabditis elegans protein is Skp1-related protein.